We begin with the raw amino-acid sequence, 1464 residues long: Alpha-glucan water dikinase, chloroplastic (1464 aa).

A chloroplast-targeting transit peptide spans 1-77; that stretch reads MSNSLGNNLL…KRAFSSSPHA (77 aa). Residue histidine 1069 is the Tele-phosphohistidine intermediate of the active site.

It belongs to the PEP-utilizing enzyme family. In terms of assembly, homodimer. The cofactor is Mg(2+). In terms of tissue distribution, expressed in leaves.

It is found in the plastid. The protein resides in the chloroplast. It catalyses the reaction [(1-&gt;4)-alpha-D-glucosyl](n) + n ATP + n H2O = [(1-&gt;4)-6-phospho-alpha-D-glucosyl](n) + n AMP + n phosphate + 2n H(+). It carries out the reaction ATP + protein L-histidine = ADP + protein N-phospho-L-histidine.. Its function is as follows. Mediates the incorporation of phosphate into starch-like alpha-glucan, mostly at the C-6 position of glucose units. Acts as an overall regulator of starch mobilization. Required for starch degradation, suggesting that the phosphate content of starch regulates its degradability. More active on alpha-1,6 branched amylopectin. This Solanum tuberosum (Potato) protein is Alpha-glucan water dikinase, chloroplastic (R1).